Here is an 820-residue protein sequence, read N- to C-terminus: Probable ATP-dependent RNA helicase DDX23 (820 aa).

Basic and acidic residues predominate over residues 1 to 42 (MAGELADKKDRDASPSKEERKRSRTPDRERDRDRDRKSSPSK). Residues 1–244 (MAGELADKKD…QKIREEKDKS (244 aa)) are disordered. A phosphoserine mark is found at Ser14 and Ser16. A compositionally biased stretch (basic residues) spans 43–65 (DRKRHRSRDRRRGGSRSRSRSRS). Positions 66-105 (KSAERERRHKERERDKERDRNKKDRDRDKDGHRRDKDRKR) are enriched in basic and acidic residues. 2 positions are modified to phosphoserine: Ser107 and Ser109. Composition is skewed to basic and acidic residues over residues 112 to 137 (RGKD…DKKP), 147 to 226 (LLAK…RETN), and 233 to 244 (GRQKIREEKDKS). Residues 391 to 419 (RSWKDSSLPPHILEVIDKCGYKEPTPIQR) carry the Q motif motif. A Helicase ATP-binding domain is found at 422–627 (IPIGLQNRDI…RSYLRRPAVV (206 aa)). 435–442 (AETGSGKT) provides a ligand contact to ATP. The short motif at 549 to 552 (DEAD) is the DEAD box element. Residues 651–799 (KRKKLLAILE…SCPPELANHP (149 aa)) enclose the Helicase C-terminal domain. Residues Lys686 and Lys811 each participate in a glycyl lysine isopeptide (Lys-Gly) (interchain with G-Cter in SUMO2) cross-link.

It belongs to the DEAD box helicase family. DDX23/PRP28 subfamily. In terms of assembly, the phosphorylated form (by SRPK2) is a component of the U4/U6-U5 tri-snRNP complex composed of the U4, U6 and U5 snRNAs and at least PRPF3, PRPF4, PRPF6, PRPF8, PRPF31, SNRNP200, TXNL4A, WDR57, SNRNP40, DDX23, CD2BP2, PPIH, SNU13, EFTUD2, SART1 and USP39. Identified in the spliceosome C complex. Interacts with ERBB4. Interacts with ERCC6. In vitro phosphorylated by CLK1 and U1 snRNP-associated protein kinase. Phosphorylated by SRPK2 and this phosphorylation is required for its association with the tri-snRNP (U4/U6-U5 tri-small nuclear ribonucleoproteins) and subsequent spliceosomal B complex formation. May be phosphorylated by SRPK2 on Ser residues in the SR domain; the phosphorylation is required for the removal of inappropriate R-loops during transcription.

It localises to the nucleus. The protein resides in the chromosome. The catalysed reaction is ATP + H2O = ADP + phosphate + H(+). Functionally, involved in pre-mRNA splicing and its phosphorylated form (by SRPK2) is required for spliceosomal B complex formation. Independently of its spliceosome formation function, required for the suppression of incorrect R-loops formed during transcription; R-loops are composed of a DNA:RNA hybrid and the associated non-template single-stranded DNA. This is Probable ATP-dependent RNA helicase DDX23 from Pongo abelii (Sumatran orangutan).